The primary structure comprises 143 residues: Putative acyl carrier protein phosphodiesterase (143 aa).

This sequence belongs to the AcpH family.

It carries out the reaction holo-[ACP] + H2O = apo-[ACP] + (R)-4'-phosphopantetheine + H(+). Functionally, converts holo-ACP to apo-ACP by hydrolytic cleavage of the phosphopantetheine prosthetic group from ACP. This is Putative acyl carrier protein phosphodiesterase (acpH) from Shigella flexneri.